The chain runs to 827 residues: Periplasmic nitrate reductase (827 aa).

Residues 1–33 (MNLSRRDFMKANAAMAAATAAGLTIPVKNVVAA) constitute a signal peptide (tat-type signal). Residues 37-93 (IKWDKGVCRFCGTGCAVLVGTKDGRVVASQGDPDAEVNRGLNCIKGYFLPKIMYGKD) enclose the 4Fe-4S Mo/W bis-MGD-type domain. [4Fe-4S] cluster contacts are provided by Cys44, Cys47, Cys51, and Cys79. Residues Lys81, Gln148, Asn173, Cys177, 210–217 (WGSNMAEM), 241–245 (STYEH), 260–262 (QTD), Met370, Gln374, Asn480, 506–507 (SD), Lys529, Asp556, and 716–725 (TGRVLEHWHT) each bind Mo-bis(molybdopterin guanine dinucleotide). A substrate-binding site is contributed by Phe792. Asn800 and Lys817 together coordinate Mo-bis(molybdopterin guanine dinucleotide).

The protein belongs to the prokaryotic molybdopterin-containing oxidoreductase family. NasA/NapA/NarB subfamily. Component of the periplasmic nitrate reductase NapAB complex composed of NapA and NapB. [4Fe-4S] cluster is required as a cofactor. It depends on Mo-bis(molybdopterin guanine dinucleotide) as a cofactor. Predicted to be exported by the Tat system. The position of the signal peptide cleavage has not been experimentally proven.

It is found in the periplasm. The catalysed reaction is 2 Fe(II)-[cytochrome] + nitrate + 2 H(+) = 2 Fe(III)-[cytochrome] + nitrite + H2O. Functionally, catalytic subunit of the periplasmic nitrate reductase complex NapAB. Receives electrons from NapB and catalyzes the reduction of nitrate to nitrite. The protein is Periplasmic nitrate reductase of Haemophilus influenzae (strain PittEE).